Here is a 60-residue protein sequence, read N- to C-terminus: Large ribosomal subunit protein uL30 (60 aa).

This sequence belongs to the universal ribosomal protein uL30 family. Part of the 50S ribosomal subunit.

The chain is Large ribosomal subunit protein uL30 from Bacillus pumilus (strain SAFR-032).